Here is a 752-residue protein sequence, read N- to C-terminus: ATP-dependent RNA helicase DRS1 (752 aa).

Disordered stretches follow at residues methionine 1 to glutamate 61 and glycine 119 to aspartate 223. Over residues aspartate 19–lysine 34 the composition is skewed to acidic residues. Residues threonine 40–lysine 51 are compositionally biased toward basic residues. Residues alanine 124–glutamate 142 show a composition bias toward basic and acidic residues. Acidic residues-rich tracts occupy residues asparagine 167 to methionine 191 and aspartate 200 to glutamate 209. Serine 208 carries the phosphoserine modification. The Q motif signature appears at glutamate 231–serine 259. The Helicase ATP-binding domain occupies isoleucine 262–isoleucine 437. Alanine 275–threonine 282 provides a ligand contact to ATP. The DEAD box motif lies at aspartate 385–aspartate 388. The Helicase C-terminal domain occupies lysine 448 to leucine 639. Positions isoleucine 621 to glutamate 667 form a coiled coil. A disordered region spans residues arginine 673–arginine 752. The span at arginine 694–lysine 705 shows a compositional bias: basic residues. Residues threonine 722–phenylalanine 734 show a composition bias toward basic and acidic residues. A compositionally biased stretch (basic residues) spans lysine 735 to arginine 752.

Belongs to the DEAD box helicase family. DDX27/DRS1 subfamily. Interacts with RRP1 and associates with pre-ribosomal particles.

The protein resides in the nucleus. Its subcellular location is the nucleolus. It catalyses the reaction ATP + H2O = ADP + phosphate + H(+). ATP-binding RNA helicase involved in ribosome assembly. This chain is ATP-dependent RNA helicase DRS1 (DRS1), found in Saccharomyces cerevisiae (strain ATCC 204508 / S288c) (Baker's yeast).